The primary structure comprises 129 residues: M-zodatoxin-Lt8h (129 aa).

Residues 1 to 20 (MKYFVVALALVAAFACIAES) form the signal peptide. Residues 21-60 (KPAESEHELAEVEEENELADLEDAVWLEDLADLSDLEETR) constitute a propeptide that is removed on maturation.

The protein belongs to the cationic peptide 06 (cytoinsectotoxin) family. In terms of tissue distribution, expressed by the venom gland.

Its subcellular location is the secreted. Insecticidal, cytolytic and antimicrobial peptide. Has insecticidal activity against the flesh fly S.carnaria. Has antibacterial activity against the Gram-negative bacteria E.coli. Forms voltage-dependent, ion-permeable channels in membranes. At high concentration causes cell membrane lysis. In Lachesana tarabaevi (Spider), this protein is M-zodatoxin-Lt8h (cit 1-11).